Consider the following 321-residue polypeptide: Ubiquitin carboxyl-terminal hydrolase ubh-4 (321 aa).

Residues 6–220 (SWCLIESDPG…ITFNLMALVP (215 aa)) form the UCH catalytic domain. The Nucleophile role is filled by cysteine 83. The Proton donor role is filled by histidine 158. Residues 273 to 301 (NYTPFVIELMKILAKEGKLVGLVDNAYQA) enclose the ULD domain.

It belongs to the peptidase C12 family. As to quaternary structure, interacts with proteasome 19S subunit rpn-13. Highly expressed in intestine and to a lesser extent in other tissues including muscles and neurons.

It catalyses the reaction Thiol-dependent hydrolysis of ester, thioester, amide, peptide and isopeptide bonds formed by the C-terminal Gly of ubiquitin (a 76-residue protein attached to proteins as an intracellular targeting signal).. In terms of biological role, ubiquitin-protein hydrolase involved both in the processing of ubiquitin precursors and of ubiquitinated proteins. This enzyme is a thiol protease that recognizes and hydrolyzes a peptide bond at the C-terminal glycine of ubiquitin. The sequence is that of Ubiquitin carboxyl-terminal hydrolase ubh-4 from Caenorhabditis elegans.